A 114-amino-acid polypeptide reads, in one-letter code: Large ribosomal subunit protein P2 (114 aa).

The tract at residues 84-114 (TDALQAGSKKGETKEGPKEESDEDMGFGLFD) is disordered. A compositionally biased stretch (basic and acidic residues) spans 92–102 (KKGETKEGPKE).

This sequence belongs to the eukaryotic ribosomal protein P1/P2 family. In terms of assembly, P1 and P2 exist as dimers at the large ribosomal subunit. In terms of processing, phosphorylated.

Its function is as follows. Plays an important role in the elongation step of protein synthesis. This chain is Large ribosomal subunit protein P2 (rpp-2), found in Brugia malayi (Filarial nematode worm).